A 67-amino-acid polypeptide reads, in one-letter code: Large ribosomal subunit protein bL31 (67 aa).

Zn(2+) contacts are provided by Cys-16, Cys-18, Cys-37, and Cys-40.

The protein belongs to the bacterial ribosomal protein bL31 family. Type A subfamily. In terms of assembly, part of the 50S ribosomal subunit. It depends on Zn(2+) as a cofactor.

Functionally, binds the 23S rRNA. This chain is Large ribosomal subunit protein bL31, found in Methylococcus capsulatus (strain ATCC 33009 / NCIMB 11132 / Bath).